Consider the following 218-residue polypeptide: DNA ADP-ribosyl transferase (218 aa).

The 204-residue stretch at 14–217 (ALIWRIVHRD…SVHTRSGWYF (204 aa)) folds into the DarT domain. NAD(+)-binding positions include 18–20 (RIV) and arginine 57. The interval 41–59 (QAENWINIGNPELIGKRAG) is NAD(+)-binding element. The active-site Proton acceptor is arginine 57. The interval 123–170 (TDSHAYYNWTNYYTSLNSLDQIDWPILQARDFRRDPDDPAKFERYQAE) is ADP-ribosylating turn-turn loop. Glutamate 170 is a catalytic residue.

The protein belongs to the DarT ADP-ribosyltransferase family. Interacts with cognate antitoxin DarG (via C-terminus); this heterodimeric complex neutralizes the toxic effect of DarT by preventing ssDNA binding to DarT and consequently inactivating the toxin by direct protein-protein interactions.

It catalyses the reaction a thymidine in DNA + NAD(+) = an N-(ADP-alpha-D-ribosyl)-thymidine in DNA + nicotinamide + H(+). Functionally, toxic component of the hybrid type II/IV toxin-antitoxin (TA) system DarTG, which plays a crucial role in controlling bacterial growth and bacteriophage infection. ADP-ribosylates ssDNA in the sequence TTT/TCT. In case of phage infection, DarT toxin ADP-ribosylates DNA, which inhibits both viral DNA and RNA synthesis and leads to abortive infection. Its toxic effect is neutralized by cognate antitoxin DarG. May target ssDNA loops during DNA replication, probably modifies thymidine. Wild-type protein cannot be expressed at low levels in the absence of its cognate antitoxin, but a mutant protein (G49D) can be expressed, which slows growth, rapidly inhibits DNA replication, and induces RecA expression and the SOS response. The slow growth phenotype can be suppressed by cognate antitoxin DarG. Has no activity on dsDNA in vitro. In vivo ADP-ribosylates genomic DNA (gDNA). Genetic data strongly suggests ADP-ribosylation by DarT probably generates ssDNA gaps that are repaired by the RecFOR-mediated homologous recombination pathway (RuvAB, RecG) and resolved by RuvC. In some cases these gaps probably migrate into dsDNA, where they are resolved by nucleotide excision repair (NER) detected by UvrAB, excised by UvrC, removed by UvrD, and repaired by Pol I and ligase. Other pathways may also be involved in ADP-ribosylation removal from DNA. The polypeptide is DNA ADP-ribosyl transferase (Escherichia coli O127:H6 (strain E2348/69 / EPEC)).